A 105-amino-acid polypeptide reads, in one-letter code: Large ribosomal subunit protein eL42 (105 aa).

A disordered region spans residues 28 to 57 (YKKGKDSLAAQGKRRYDRKQSGYGGQTKPV).

The protein belongs to the eukaryotic ribosomal protein eL42 family.

This Gossypium hirsutum (Upland cotton) protein is Large ribosomal subunit protein eL42 (RPL44).